A 35-amino-acid polypeptide reads, in one-letter code: Dermonecrotic toxin LrSicTox-alphaI-1 (35 aa).

Residue His11 is part of the active site. Asp33 provides a ligand contact to Mg(2+).

This sequence belongs to the arthropod phospholipase D family. Class II subfamily. Mg(2+) serves as cofactor. Post-translationally, contains 2 disulfide bonds. As to expression, expressed by the venom gland.

It is found in the secreted. It catalyses the reaction an N-(acyl)-sphingosylphosphocholine = an N-(acyl)-sphingosyl-1,3-cyclic phosphate + choline. The catalysed reaction is an N-(acyl)-sphingosylphosphoethanolamine = an N-(acyl)-sphingosyl-1,3-cyclic phosphate + ethanolamine. It carries out the reaction a 1-acyl-sn-glycero-3-phosphocholine = a 1-acyl-sn-glycero-2,3-cyclic phosphate + choline. The enzyme catalyses a 1-acyl-sn-glycero-3-phosphoethanolamine = a 1-acyl-sn-glycero-2,3-cyclic phosphate + ethanolamine. Functionally, dermonecrotic toxins cleave the phosphodiester linkage between the phosphate and headgroup of certain phospholipids (sphingolipid and lysolipid substrates), forming an alcohol (often choline) and a cyclic phosphate. This toxin acts on sphingomyelin (SM). It may also act on ceramide phosphoethanolamine (CPE), lysophosphatidylcholine (LPC) and lysophosphatidylethanolamine (LPE), but not on lysophosphatidylserine (LPS), and lysophosphatidylglycerol (LPG). It acts by transphosphatidylation, releasing exclusively cyclic phosphate products as second products. Induces dermonecrosis, hemolysis, increased vascular permeability, edema, inflammatory response, and platelet aggregation. This chain is Dermonecrotic toxin LrSicTox-alphaI-1, found in Loxosceles reclusa (Brown recluse spider).